The primary structure comprises 803 residues: Bifunctional enzyme MurC/Ddl (803 aa).

A UDP-N-acetylmuramate--alanine ligase region spans residues methionine 1–glutamine 446. ATP-binding positions include glycine 111–threonine 117 and valine 600–isoleucine 655. Residues lysine 447–glutamine 803 form a D-alanine--D-alanine ligase region. The ATP-grasp domain maps to lysine 567 to isoleucine 778. Residues aspartate 732, glutamate 745, and asparagine 747 each contribute to the Mg(2+) site.

In the N-terminal section; belongs to the MurCDEF family. This sequence in the C-terminal section; belongs to the D-alanine--D-alanine ligase family. Mg(2+) is required as a cofactor. It depends on Mn(2+) as a cofactor.

The protein localises to the cytoplasm. It catalyses the reaction UDP-N-acetyl-alpha-D-muramate + L-alanine + ATP = UDP-N-acetyl-alpha-D-muramoyl-L-alanine + ADP + phosphate + H(+). The enzyme catalyses 2 D-alanine + ATP = D-alanyl-D-alanine + ADP + phosphate + H(+). Its pathway is cell wall biogenesis; peptidoglycan biosynthesis. Functionally, cell wall formation. This is Bifunctional enzyme MurC/Ddl (murC/ddl) from Chlamydia trachomatis serovar D (strain ATCC VR-885 / DSM 19411 / UW-3/Cx).